The sequence spans 192 residues: Imidazoleglycerol-phosphate dehydratase (192 aa).

This sequence belongs to the imidazoleglycerol-phosphate dehydratase family.

The protein resides in the cytoplasm. It carries out the reaction D-erythro-1-(imidazol-4-yl)glycerol 3-phosphate = 3-(imidazol-4-yl)-2-oxopropyl phosphate + H2O. It functions in the pathway amino-acid biosynthesis; L-histidine biosynthesis; L-histidine from 5-phospho-alpha-D-ribose 1-diphosphate: step 6/9. In Staphylococcus aureus (strain bovine RF122 / ET3-1), this protein is Imidazoleglycerol-phosphate dehydratase.